Consider the following 682-residue polypeptide: MQLEHCLSPSIMLSKKFLNVSSSYPHSGGSELVLHDHPIISTTDNLERSSPLKKITRGMTNQSDTDNFPDSKDSPGDVQRSKLSPVLDGVSELRHSFDGSAADRYLLSQSSQPQSAATAPSAMFPYPGQHGPAHPAFSIGSPSRYMAHHPVITNGAYNSLLSNSSPQGYPTAGYPYPQQYGHSYQGAPFYQFSSTQPGLVPGKAQVYLCNRPLWLKFHRHQTEMIITKQGRRMFPFLSFNISGLDPTAHYNIFVDVILADPNHWRFQGGKWVPCGKADTNVQGNRVYMHPDSPNTGAHWMRQEISFGKLKLTNNKGASNNNGQMVVLQSLHKYQPRLHVVEVNEDGTEDTSQPGRVQTFTFPETQFIAVTAYQNTDITQLKIDHNPFAKGFRDNYDTIYTGCDMDRLTPSPNDSPRSQIVPGARYAMAGSFLQDQFVSNYAKARFHPGAGAGPGPGTDRSVPHTNGLLSPQQAEDPGAPSPQRWFVTPANNRLDFAASAYDTATDFAGNAATLLSYAAAGVKALPLQAAGCTGRPLGYYADPSGWGARSPPQYCGTKSGSVLPCWPNSAAAAARMAGANPYLGEEAEGLAAERSPLPPGAAEDAKPKDLSDSSWIETPSSIKSIDSSDSGIYEQAKRRRISPADTPVSESSSPLKSEVLAQRDCEKNCAKDISGYYGFYSHS.

2 disordered regions span residues 43 to 83 and 108 to 127; these read TDNL…RSKL and SQSSQPQSAATAPSAMFPYP. Residues 58-68 are compositionally biased toward polar residues; it reads GMTNQSDTDNF. Positions 108–122 are enriched in low complexity; the sequence is SQSSQPQSAATAPSA. Positions 213–393 form a DNA-binding region, T-box; it reads LWLKFHRHQT…HNPFAKGFRD (181 aa). T408 carries the phosphothreonine modification. S410 is subject to Phosphoserine. Disordered stretches follow at residues 447–483 and 588–658; these read PGAGAGPGPGTDRSVPHTNGLLSPQQAEDPGAPSPQR and GLAA…KSEV. Over residues 462–472 the composition is skewed to polar residues; the sequence is PHTNGLLSPQQ. S594 carries the post-translational modification Phosphoserine. The segment covering 619-629 has biased composition (low complexity); the sequence is SSIKSIDSSDS. S641 carries the post-translational modification Phosphoserine.

In terms of assembly, homodimer. Part of a complex containing CASK, TBR1 and TSPYL2; may modulate gene expression in response to neuronal synaptic activity. Interacts with FOXP2. Interacts with FOXP1. Interacts with BCL11A. As to expression, brain.

It localises to the nucleus. In terms of biological role, transcriptional repressor involved in multiple aspects of cortical development, including neuronal migration, laminar and areal identity, and axonal projection. As transcriptional repressor of FEZF2, it blocks the formation of the corticospinal (CS) tract from layer 6 projection neurons, thereby restricting the origin of CS axons specifically to layer 5 neurons. This is T-box brain protein 1 (TBR1) from Homo sapiens (Human).